Here is a 131-residue protein sequence, read N- to C-terminus: Meiotically up-regulated gene 115 protein (131 aa).

The protein resides in the mitochondrion. The protein localises to the nucleus. In terms of biological role, has a role in meiosis. This Schizosaccharomyces pombe (strain 972 / ATCC 24843) (Fission yeast) protein is Meiotically up-regulated gene 115 protein (mug115).